Here is a 161-residue protein sequence, read N- to C-terminus: N5-carboxyaminoimidazole ribonucleotide mutase (161 aa).

Substrate contacts are provided by Ser-9, Asp-12, and Arg-39.

Belongs to the AIR carboxylase family. Class I subfamily.

The enzyme catalyses 5-carboxyamino-1-(5-phospho-D-ribosyl)imidazole + H(+) = 5-amino-1-(5-phospho-D-ribosyl)imidazole-4-carboxylate. It functions in the pathway purine metabolism; IMP biosynthesis via de novo pathway; 5-amino-1-(5-phospho-D-ribosyl)imidazole-4-carboxylate from 5-amino-1-(5-phospho-D-ribosyl)imidazole (N5-CAIR route): step 2/2. Functionally, catalyzes the conversion of N5-carboxyaminoimidazole ribonucleotide (N5-CAIR) to 4-carboxy-5-aminoimidazole ribonucleotide (CAIR). This Vibrio cholerae serotype O1 (strain ATCC 39315 / El Tor Inaba N16961) protein is N5-carboxyaminoimidazole ribonucleotide mutase.